Here is a 136-residue protein sequence, read N- to C-terminus: Protein NrdI (136 aa).

This sequence belongs to the NrdI family.

Its function is as follows. Probably involved in ribonucleotide reductase function. In Enterobacter sp. (strain 638), this protein is Protein NrdI.